Consider the following 134-residue polypeptide: Small ribosomal subunit protein uS9c (134 aa).

The span at 105-114 (DHHLTRDARA) shows a compositional bias: basic and acidic residues. The disordered stretch occupies residues 105 to 134 (DHHLTRDARAKERKKYGLHKARKAPQYSKR). Residues 115-134 (KERKKYGLHKARKAPQYSKR) are compositionally biased toward basic residues.

The protein belongs to the universal ribosomal protein uS9 family.

It is found in the plastid. The protein localises to the cyanelle. The chain is Small ribosomal subunit protein uS9c (rps9) from Cyanophora paradoxa.